The primary structure comprises 432 residues: Tyrosine--tRNA ligase (432 aa).

The short motif at 46 to 55 (PTRPDLHLGH) is the 'HIGH' region element. Positions 232–236 (KMSKS) match the 'KMSKS' region motif. ATP is bound at residue K235. In terms of domain architecture, S4 RNA-binding spans 369 to 430 (IWVARLFTLA…GKDRFVRVRL (62 aa)).

Belongs to the class-I aminoacyl-tRNA synthetase family. TyrS type 2 subfamily. In terms of assembly, homodimer.

The protein resides in the cytoplasm. It carries out the reaction tRNA(Tyr) + L-tyrosine + ATP = L-tyrosyl-tRNA(Tyr) + AMP + diphosphate + H(+). Catalyzes the attachment of tyrosine to tRNA(Tyr) in a two-step reaction: tyrosine is first activated by ATP to form Tyr-AMP and then transferred to the acceptor end of tRNA(Tyr). This is Tyrosine--tRNA ligase from Thermus thermophilus (strain ATCC BAA-163 / DSM 7039 / HB27).